The following is a 203-amino-acid chain: DNA-directed RNA polymerase subunit gamma (203 aa).

4 residues coordinate Zn(2+): Cys34, Cys36, Cys49, and Cys52.

This sequence belongs to the RNA polymerase beta' chain family. RpoC1 subfamily. In cyanobacteria the RNAP catalytic core is composed of 2 alpha, 1 beta, 1 beta', 1 gamma and 1 omega subunit. When a sigma factor is associated with the core the holoenzyme is formed, which can initiate transcription. It depends on Zn(2+) as a cofactor.

The catalysed reaction is RNA(n) + a ribonucleoside 5'-triphosphate = RNA(n+1) + diphosphate. Its function is as follows. DNA-dependent RNA polymerase catalyzes the transcription of DNA into RNA using the four ribonucleoside triphosphates as substrates. In Fischerella muscicola, this protein is DNA-directed RNA polymerase subunit gamma (rpoC1).